A 307-amino-acid polypeptide reads, in one-letter code: 4-hydroxy-3-methylbut-2-enyl diphosphate reductase (307 aa).

[4Fe-4S] cluster is bound at residue Cys-13. Residues His-42 and His-75 each coordinate (2E)-4-hydroxy-3-methylbut-2-enyl diphosphate. 2 residues coordinate dimethylallyl diphosphate: His-42 and His-75. Residues His-42 and His-75 each coordinate isopentenyl diphosphate. Cys-97 contributes to the [4Fe-4S] cluster binding site. His-125 lines the (2E)-4-hydroxy-3-methylbut-2-enyl diphosphate pocket. A dimethylallyl diphosphate-binding site is contributed by His-125. Isopentenyl diphosphate is bound at residue His-125. Glu-127 acts as the Proton donor in catalysis. Thr-165 provides a ligand contact to (2E)-4-hydroxy-3-methylbut-2-enyl diphosphate. [4Fe-4S] cluster is bound at residue Cys-195. Residues Ser-223, Ser-224, Asn-225, and Ser-267 each contribute to the (2E)-4-hydroxy-3-methylbut-2-enyl diphosphate site. The dimethylallyl diphosphate site is built by Ser-223, Ser-224, Asn-225, and Ser-267. Isopentenyl diphosphate is bound by residues Ser-223, Ser-224, Asn-225, and Ser-267.

The protein belongs to the IspH family. It depends on [4Fe-4S] cluster as a cofactor.

The enzyme catalyses isopentenyl diphosphate + 2 oxidized [2Fe-2S]-[ferredoxin] + H2O = (2E)-4-hydroxy-3-methylbut-2-enyl diphosphate + 2 reduced [2Fe-2S]-[ferredoxin] + 2 H(+). It carries out the reaction dimethylallyl diphosphate + 2 oxidized [2Fe-2S]-[ferredoxin] + H2O = (2E)-4-hydroxy-3-methylbut-2-enyl diphosphate + 2 reduced [2Fe-2S]-[ferredoxin] + 2 H(+). It participates in isoprenoid biosynthesis; dimethylallyl diphosphate biosynthesis; dimethylallyl diphosphate from (2E)-4-hydroxy-3-methylbutenyl diphosphate: step 1/1. The protein operates within isoprenoid biosynthesis; isopentenyl diphosphate biosynthesis via DXP pathway; isopentenyl diphosphate from 1-deoxy-D-xylulose 5-phosphate: step 6/6. In terms of biological role, catalyzes the conversion of 1-hydroxy-2-methyl-2-(E)-butenyl 4-diphosphate (HMBPP) into a mixture of isopentenyl diphosphate (IPP) and dimethylallyl diphosphate (DMAPP). Acts in the terminal step of the DOXP/MEP pathway for isoprenoid precursor biosynthesis. The chain is 4-hydroxy-3-methylbut-2-enyl diphosphate reductase from Chlamydia trachomatis serovar L2b (strain UCH-1/proctitis).